A 717-amino-acid chain; its full sequence is Glutamine--fructose-6-phosphate aminotransferase [isomerizing] (717 aa).

Cysteine 2 acts as the For GATase activity in catalysis. Residues 2-318 enclose the Glutamine amidotransferase type-2 domain; the sequence is CGIFGYCNYL…DDDLAHIYDG (317 aa). Serine 253 bears the Phosphoserine mark. A Phosphothreonine modification is found at threonine 334. Serine 336 carries the post-translational modification Phosphoserine. SIS domains lie at 390 to 529 and 562 to 707; these read WLPV…DRVS and CATE…VDFP.

The enzyme catalyses D-fructose 6-phosphate + L-glutamine = D-glucosamine 6-phosphate + L-glutamate. Its pathway is nucleotide-sugar biosynthesis; UDP-N-acetyl-alpha-D-glucosamine biosynthesis; alpha-D-glucosamine 6-phosphate from D-fructose 6-phosphate: step 1/1. Involved in amino sugar synthesis (formation of chitin, supplies the amino sugars of asparagine-linked oligosaccharides of glycoproteins). The sequence is that of Glutamine--fructose-6-phosphate aminotransferase [isomerizing] (GFA1) from Saccharomyces cerevisiae (strain ATCC 204508 / S288c) (Baker's yeast).